The primary structure comprises 84 residues: Large ribosomal subunit protein bL31B-2 (84 aa).

Belongs to the bacterial ribosomal protein bL31 family. Type B subfamily. As to quaternary structure, part of the 50S ribosomal subunit.

The protein is Large ribosomal subunit protein bL31B-2 of Streptomyces coelicolor (strain ATCC BAA-471 / A3(2) / M145).